The primary structure comprises 47 residues: Large ribosomal subunit protein bL34 (47 aa).

This sequence belongs to the bacterial ribosomal protein bL34 family.

This Mycobacterium sp. (strain JLS) protein is Large ribosomal subunit protein bL34.